The following is a 124-amino-acid chain: Fluoride-specific ion channel FluC (124 aa).

A run of 4 helical transmembrane segments spans residues 1 to 21 (MAYLLVFVGGGLGAMFRHFIN), 36 to 56 (TFFINVTGSIVMGLIAGYLAF), 66 to 86 (LFLMTGILGGYTTFSAFSLDA), and 94 to 114 (AVGLAVVYVLGSVVLAIAGLF). Residues G74 and T77 each contribute to the Na(+) site.

This sequence belongs to the fluoride channel Fluc/FEX (TC 1.A.43) family.

The protein localises to the cell inner membrane. It catalyses the reaction fluoride(in) = fluoride(out). With respect to regulation, na(+) is not transported, but it plays an essential structural role and its presence is essential for fluoride channel function. Functionally, fluoride-specific ion channel. Important for reducing fluoride concentration in the cell, thus reducing its toxicity. The polypeptide is Fluoride-specific ion channel FluC (Rhodopseudomonas palustris (strain ATCC BAA-98 / CGA009)).